The chain runs to 348 residues: Phenylalanine--tRNA ligase alpha subunit (348 aa).

A Mg(2+)-binding site is contributed by Glu259.

It belongs to the class-II aminoacyl-tRNA synthetase family. Phe-tRNA synthetase alpha subunit type 1 subfamily. As to quaternary structure, tetramer of two alpha and two beta subunits. The cofactor is Mg(2+).

It is found in the cytoplasm. The catalysed reaction is tRNA(Phe) + L-phenylalanine + ATP = L-phenylalanyl-tRNA(Phe) + AMP + diphosphate + H(+). This chain is Phenylalanine--tRNA ligase alpha subunit, found in Ligilactobacillus salivarius (strain UCC118) (Lactobacillus salivarius).